The sequence spans 74 residues: Large ribosomal subunit protein bL31 (74 aa).

The protein belongs to the bacterial ribosomal protein bL31 family. Type A subfamily. As to quaternary structure, part of the 50S ribosomal subunit.

Its function is as follows. Binds the 23S rRNA. This is Large ribosomal subunit protein bL31 from Synechococcus sp. (strain JA-2-3B'a(2-13)) (Cyanobacteria bacterium Yellowstone B-Prime).